Reading from the N-terminus, the 504-residue chain is ATP synthase subunit alpha (504 aa).

Position 170 to 177 (170 to 177 (GDRQTGKT)) interacts with ATP.

Belongs to the ATPase alpha/beta chains family. F-type ATPases have 2 components, CF(1) - the catalytic core - and CF(0) - the membrane proton channel. CF(1) has five subunits: alpha(3), beta(3), gamma(1), delta(1), epsilon(1). CF(0) has four main subunits: a(1), b(1), b'(1) and c(9-12).

Its subcellular location is the cellular thylakoid membrane. It carries out the reaction ATP + H2O + 4 H(+)(in) = ADP + phosphate + 5 H(+)(out). In terms of biological role, produces ATP from ADP in the presence of a proton gradient across the membrane. The alpha chain is a regulatory subunit. This is ATP synthase subunit alpha from Prochlorococcus marinus (strain NATL1A).